Here is a 168-residue protein sequence, read N- to C-terminus: Endoribonuclease YbeY (168 aa).

Positions 132, 136, and 142 each coordinate Zn(2+).

Belongs to the endoribonuclease YbeY family. Requires Zn(2+) as cofactor.

It is found in the cytoplasm. Its function is as follows. Single strand-specific metallo-endoribonuclease involved in late-stage 70S ribosome quality control and in maturation of the 3' terminus of the 16S rRNA. The chain is Endoribonuclease YbeY from Clostridium perfringens (strain ATCC 13124 / DSM 756 / JCM 1290 / NCIMB 6125 / NCTC 8237 / Type A).